A 179-amino-acid polypeptide reads, in one-letter code: Large ribosomal subunit protein uL6 (179 aa).

This sequence belongs to the universal ribosomal protein uL6 family. In terms of assembly, part of the 50S ribosomal subunit.

Functionally, this protein binds to the 23S rRNA, and is important in its secondary structure. It is located near the subunit interface in the base of the L7/L12 stalk, and near the tRNA binding site of the peptidyltransferase center. This is Large ribosomal subunit protein uL6 from Prochlorococcus marinus (strain MIT 9312).